Here is a 512-residue protein sequence, read N- to C-terminus: Gasdermin-E (512 aa).

The interval 1 to 56 is membrane targeting domain; it reads MFAKATRNFLKEVDAGGDLISVSHLNDSDKLQLLSLVTKKKRYWCWQRPKYQILSA. At cysteine 45 the chain carries S-(2-succinyl)cysteine. Lysine 120 is covalently cross-linked (Glycyl lysine isopeptide (Lys-Gly) (interchain with G-Cter in ubiquitin)). An S-(2-succinyl)cysteine mark is found at cysteine 156, cysteine 168, and cysteine 180. Residue lysine 189 forms a Glycyl lysine isopeptide (Lys-Gly) (interchain with G-Cter in ubiquitin) linkage. An S-(2-succinyl)cysteine mark is found at cysteine 235, cysteine 411, and cysteine 420.

This sequence belongs to the gasdermin family. In terms of assembly, homooligomer; homooligomeric ring-shaped pore complex containing 27-28 subunits when inserted in the membrane. In terms of processing, cleavage at Asp-270 by CASP3 (mature and uncleaved precursor forms) or granzyme B (GZMB) relieves autoinhibition and is sufficient to initiate pyroptosis. Succination by the Krebs cycle intermediate fumarate, which leads to S-(2-succinyl)cysteine residues, inhibits processing by caspases, and ability to initiate pyroptosis. Succination modification is catalyzed by a non-enzymatic reaction caused by an accumulation of fumarate. Post-translationally, ubiquitinated on Lys-120 and Lys-189 via 'Lys-48'-linked polyubiquitin chains, leading to proteasomal degradation. Deubiquitinated by USP48, leading to increased stability. In terms of processing, palmitoylated. As to expression, expressed in spleen, kidney, large and small intestine, testicle, stomach and by CD4(+)CD(8+) T cells in thymus. Expressed by macrophages.

It is found in the cell membrane. The protein localises to the cytoplasm. It localises to the cytosol. With respect to regulation, the full-length protein before cleavage is inactive: intramolecular interactions between N- and C-terminal domains mediate autoinhibition in the absence of activation signal. The intrinsic pyroptosis-inducing activity is carried by the released N-terminal moiety (Gasdermin-E, N-terminal) following cleavage by CASP3 or granzyme B (GZMB). Activated by NLRP1 in the absence of GSDMD expression: NLRP1 cleaves and activates CASP8, promoting downstream activation of CASP3 and subsequent activation of GSDME. Precursor of a pore-forming protein that converts non-inflammatory apoptosis to pyroptosis. This form constitutes the precursor of the pore-forming protein: upon cleavage, the released N-terminal moiety (Gasdermin-E, N-terminal) binds to membranes and forms pores, triggering pyroptosis. In terms of biological role, pore-forming protein produced by cleavage by CASP3 or granzyme B (GZMB), which converts non-inflammatory apoptosis to pyroptosis or promotes granzyme-mediated pyroptosis, respectively. After cleavage, moves to the plasma membrane, homooligomerizes within the membrane and forms pores of 10-15 nanometers (nm) of inner diameter, allowing the release of mature interleukins (IL1B and IL16) and triggering pyroptosis. Binds to inner leaflet lipids, bisphosphorylated phosphatidylinositols, such as phosphatidylinositol (4,5)-bisphosphate. Cleavage by CASP3 switches CASP3-mediated apoptosis induced by TNF or danger signals, such as chemotherapy drugs, to pyroptosis. Mediates secondary necrosis downstream of the mitochondrial apoptotic pathway and CASP3 activation as well as in response to viral agents. Exhibits bactericidal activity. Cleavage by GZMB promotes tumor suppressor activity by triggering robust anti-tumor immunity. Suppresses tumors by mediating granzyme-mediated pyroptosis in target cells of natural killer (NK) cells: cleavage by granzyme B (GZMB), delivered to target cells from NK-cells, triggers pyroptosis of tumor cells and tumor suppression. May play a role in the p53/TP53-regulated cellular response to DNA damage. In Mus musculus (Mouse), this protein is Gasdermin-E.